Reading from the N-terminus, the 673-residue chain is MNGVEVPAKIQKRIERLRQEINDHNYRYYVLSQPTIPDSVYDELFHELEKLEKKYPETITPSSPTQRVGAEPLKVFEPVHHEIPMLSLDNVFDEKGLRAFDKRIRQRLKLDKPFEYVCEPKMDGVALSLLYENGELIRAATRGDGYTGENVTQNTRTIASVPLQLRGNDYPELVEIRGEVLMPREGFAKFNREAEKRGDKTFANPRNAASGSLRQLDPRITAKRPLIFYGYLIGLLKGKDFPKNHCDVLKWFKDWGIPVISEIKVVGGIEGCLDYYEHLVKTREKMPFDIDGIVIKVNSLQVQAELGFVSRAPRWAIAYKFPAQEKMTVVKAIEFQVGRTGAVTPVARLEPVSVSGVTVSNATLHNFDELYRKDVRVGDTVIVRRAGDVIPEVVGPILAKRPKKAKLIKIPSRCPVCHAEVIKPEGEAVARCVGGLYCRAQLRESIKHFASRRALDIEGLGDKLVELFIQEKLIKDITGIYQLKKSAITALPRMGEKSAENLLTAIEKSKKTTLPRFLYALGIRGVGDTTARTLARHFHELDLLMKASIETLQEIRDIGPVAAENIHAFFHQKNNAELINKLIHLGVHWPQEKAVVKSEIAGKTFVLTGALKSLTREEAEEKIERSGGKATSSVSKNTDYVIVGENPGSKYEKAKALGISLIDEEAFLKLLKS.

Residues 38–42 (DSVYD), 87–88 (SL), and E119 each bind NAD(+). The active-site N6-AMP-lysine intermediate is K121. Positions 142, 179, 296, and 320 each coordinate NAD(+). The Zn(2+) site is built by C414, C417, C432, and C438. The BRCT domain maps to 595-673 (VVKSEIAGKT…EEAFLKLLKS (79 aa)).

This sequence belongs to the NAD-dependent DNA ligase family. LigA subfamily. The cofactor is Mg(2+). It depends on Mn(2+) as a cofactor.

It carries out the reaction NAD(+) + (deoxyribonucleotide)n-3'-hydroxyl + 5'-phospho-(deoxyribonucleotide)m = (deoxyribonucleotide)n+m + AMP + beta-nicotinamide D-nucleotide.. DNA ligase that catalyzes the formation of phosphodiester linkages between 5'-phosphoryl and 3'-hydroxyl groups in double-stranded DNA using NAD as a coenzyme and as the energy source for the reaction. It is essential for DNA replication and repair of damaged DNA. This is DNA ligase from Coxiella burnetii (strain RSA 493 / Nine Mile phase I).